A 422-amino-acid polypeptide reads, in one-letter code: Serine protease inhibitor A3A (422 aa).

Residues methionine 1–alanine 17 form the signal peptide. 3 N-linked (GlcNAc...) asparagine glycosylation sites follow: asparagine 218, asparagine 230, and asparagine 271. Residues histidine 369 to valine 394 are RCL.

This sequence belongs to the serpin family.

The protein localises to the secreted. This is Serine protease inhibitor A3A (Serpina3a) from Mus musculus (Mouse).